Consider the following 232-residue polypeptide: Protein TIFY 10c (232 aa).

The disordered stretch occupies residues 54–73; the sequence is PPAAGAGGAFRPPPTTMNLL. In terms of domain architecture, Tify spans 114–149; it reads AGEKAQQLTIFYGGKVVVFENFPSTKVKDLLQIVST. Positions 152-177 are disordered; sequence GVDKNTGTAATQSLPRPAHNSLPDLP. Residues 156–165 show a composition bias toward polar residues; the sequence is NTGTAATQSL. The Jas signature appears at 177 to 202; it reads PIARRNSLHRFLEKRKGRMNANAPYQ. The Nuclear localization signal motif lies at 179–186; the sequence is ARRNSLHR.

Belongs to the TIFY/JAZ family. In terms of assembly, interacts with BHLH148. Interacts with COI1B in a coronatine-dependent manner. Coronatine is an analog of jasmonoyl isoleucine (JA-Ile). Interacts with TIFY5/JAZ2, TIFY6B/JAZ4, TIFY9/JAZ5, TIFY11A, TIFY11D/JAZ12, TIFY11G/JAZ15 and NINJA1. Ubiquitinated. Increase in jasmonoyl isoleucine (JA-Ile) levels mediates its degradation via COI1B-mediated proteasome pathway.

The protein localises to the nucleus. The protein resides in the cytoplasm. It localises to the cytosol. Repressor of jasmonate (JA) responses. Acts as a repressor of JA-induced resistance to the bacterial blight pathogen Xanthomonas oryzae pv. oryzae (Xoo). Regulates JA-induced accumulation of linalool at the transcriptional level of linalool synthase gene LIS. Linalool is important for resistance to bacterial blight pathogen Xoo. The polypeptide is Protein TIFY 10c (Oryza sativa subsp. japonica (Rice)).